Consider the following 82-residue polypeptide: MTRILLLLLRFYQYFISPLLSNNCRFHPTCSEYAKEAISMHGSIKGLWLTFKRIIKCQPFCDGGYDTVPISIKNSKPLNKKI.

The protein belongs to the UPF0161 family.

It is found in the cell inner membrane. Functionally, could be involved in insertion of integral membrane proteins into the membrane. The polypeptide is Putative membrane protein insertion efficiency factor (Rickettsia massiliae (strain Mtu5)).